The primary structure comprises 328 residues: UPF0421 protein SAUSA300_1870 (328 aa).

Transmembrane regions (helical) follow at residues 19 to 39 (IAIFLTAVFCMALDLTPIYAI), 61 to 81 (LPATVIGAGFAVLFTYLFGDQ), 108 to 128 (VAVLTSLAMIPGIHDAYIFNF), and 132 to 152 (TLTAIIGLVTSGLINFMVFPP).

This sequence belongs to the UPF0421 family.

The protein localises to the cell membrane. The polypeptide is UPF0421 protein SAUSA300_1870 (Staphylococcus aureus (strain USA300)).